The primary structure comprises 724 residues: Degenerin mec-10 (724 aa).

A compositionally biased stretch (polar residues) spans 1 to 15 (MNRNPRMSKFQPNPR). Positions 1–22 (MNRNPRMSKFQPNPRSRSRFQD) are disordered. Topologically, residues 1–122 (MNRNPRMSKF…GQAPNSLYRA (122 aa)) are cytoplasmic. A helical membrane pass occupies residues 123 to 143 (AWVFLLLICAIQFINQAVAVI). The Extracellular portion of the chain corresponds to 144–684 (QKYQKMDKIT…FGGHLGLWSG (541 aa)). The segment at 229–265 (KRGAGEKGTFEPANSACECDEEDGSNECEERSTEKPS) is disordered. The span at 246 to 255 (ECDEEDGSNE) shows a compositional bias: acidic residues. The span at 256–265 (CEERSTEKPS) shows a compositional bias: basic and acidic residues. N-linked (GlcNAc...) asparagine glycans are attached at residues N293, N369, N463, N605, and N624. A helical membrane pass occupies residues 685 to 705 (VSVMTCCEFVCLAFELIYMAI). Residues 706 to 724 (AHHINQQRIRRRENAANEY) are Cytoplasmic-facing.

This sequence belongs to the amiloride-sensitive sodium channel (TC 1.A.6) family. Component of a non-voltage-gated amiloride-sensitive cation channel complex (also called the degenerin channel complex) composed of at least the mec-2, mec-4, mec-6 and mec-10 subunits; the complex mediates mechanotransduction in touch cells. Interacts with mec-4 and mec-6.

It localises to the cell membrane. Its function is as follows. Subunit of an amiloride-sensitive cation channel (degenerin channel complex) permeable for sodium, potassium, lithium and N-methylglucamine, and required for mechanosensory transduction (touch sensitivity). Negatively regulates the turning step of male mating behavior. The protein is Degenerin mec-10 of Caenorhabditis elegans.